The following is a 506-amino-acid chain: Cytochrome P450 6a2 (506 aa).

Cysteine 451 provides a ligand contact to heme.

Belongs to the cytochrome P450 family. Heme serves as cofactor.

The protein localises to the endoplasmic reticulum membrane. It localises to the microsome membrane. Is involved in the breakdown of synthetic insecticides and may be involved in the metabolism of insect hormones. This Drosophila melanogaster (Fruit fly) protein is Cytochrome P450 6a2 (Cyp6a2).